Here is a 294-residue protein sequence, read N- to C-terminus: Phosphatidylglycerol--prolipoprotein diacylglyceryl transferase (294 aa).

Transmembrane regions (helical) follow at residues V19–L39, L69–Y89, I101–A121, I139–A159, Q195–W215, G224–F244, and W267–I287. A 1,2-diacyl-sn-glycero-3-phospho-(1'-sn-glycerol) is bound at residue R152.

The protein belongs to the Lgt family.

The protein localises to the cell inner membrane. It carries out the reaction L-cysteinyl-[prolipoprotein] + a 1,2-diacyl-sn-glycero-3-phospho-(1'-sn-glycerol) = an S-1,2-diacyl-sn-glyceryl-L-cysteinyl-[prolipoprotein] + sn-glycerol 1-phosphate + H(+). It participates in protein modification; lipoprotein biosynthesis (diacylglyceryl transfer). Functionally, catalyzes the transfer of the diacylglyceryl group from phosphatidylglycerol to the sulfhydryl group of the N-terminal cysteine of a prolipoprotein, the first step in the formation of mature lipoproteins. The protein is Phosphatidylglycerol--prolipoprotein diacylglyceryl transferase of Roseobacter denitrificans (strain ATCC 33942 / OCh 114) (Erythrobacter sp. (strain OCh 114)).